Reading from the N-terminus, the 464-residue chain is Glutamate--tRNA ligase (464 aa).

The 'HIGH' region signature appears at 10-20; it reads PSPTGHLHLGG. Residues Cys99, Cys101, Cys126, and Glu128 each coordinate Zn(2+). The short motif at 236–240 is the 'KMSKS' region element; the sequence is KLSKR. Lys239 serves as a coordination point for ATP.

It belongs to the class-I aminoacyl-tRNA synthetase family. Glutamate--tRNA ligase type 1 subfamily. As to quaternary structure, monomer. The cofactor is Zn(2+).

It is found in the cytoplasm. The enzyme catalyses tRNA(Glu) + L-glutamate + ATP = L-glutamyl-tRNA(Glu) + AMP + diphosphate. Functionally, catalyzes the attachment of glutamate to tRNA(Glu) in a two-step reaction: glutamate is first activated by ATP to form Glu-AMP and then transferred to the acceptor end of tRNA(Glu). This is Glutamate--tRNA ligase from Oleidesulfovibrio alaskensis (strain ATCC BAA-1058 / DSM 17464 / G20) (Desulfovibrio alaskensis).